A 379-amino-acid chain; its full sequence is NADH-rubredoxin oxidoreductase (379 aa).

Disulfide bonds link Cys26–Cys286 and Cys137–Cys216. FAD contacts are provided by residues 33–35 (NSE), Arg42, Ala79, and Tyr125. Asp259 is a binding site for FAD.

This sequence belongs to the FAD-dependent oxidoreductase family. In terms of assembly, monomer. The cofactor is FAD.

It catalyses the reaction 2 reduced [rubredoxin] + NAD(+) + H(+) = 2 oxidized [rubredoxin] + NADH. Its function is as follows. Catalyzes the NADH-dependent reduction of rubredoxin (Rd). NADPH is a very poor electron donor compared to NADH. Functions as an intermediate component in the electron transfer chain: NADH-&gt;NROR-&gt;Rd-&gt;FprA1/2. Also functions as an intermediate component in the electron transfer chains from NADH to revRbr and Dfx. Therefore, is a key electron carrier in an efficient multienzyme complex that can scavenge O(2) and reactive oxygen species (ROS), and thus plays an important role in the oxidative stress defense system in C.acetobutylicum, an obligate anaerobic bacterium. The sequence is that of NADH-rubredoxin oxidoreductase (nroR) from Clostridium acetobutylicum (strain ATCC 824 / DSM 792 / JCM 1419 / IAM 19013 / LMG 5710 / NBRC 13948 / NRRL B-527 / VKM B-1787 / 2291 / W).